The chain runs to 351 residues: Flagellin (351 aa).

This sequence belongs to the bacterial flagellin family.

It is found in the secreted. The protein resides in the bacterial flagellum. Functionally, flagellin is the subunit protein which polymerizes to form the filaments of bacterial flagella. The protein is Flagellin (fliC) of Serratia marcescens.